We begin with the raw amino-acid sequence, 327 residues long: 7,8-didemethyl-8-hydroxy-5-deazariboflavin synthase (327 aa).

The region spanning 6–244 (ITFSRNVFLP…EEVAVQVAPN (239 aa)) is the Radical SAM core domain. Positions 20, 24, and 27 each coordinate [4Fe-4S] cluster.

The protein belongs to the radical SAM superfamily. CofG family. Consists of two subunits, CofG and CofH. [4Fe-4S] cluster is required as a cofactor.

The catalysed reaction is 5-amino-5-(4-hydroxybenzyl)-6-(D-ribitylimino)-5,6-dihydrouracil + S-adenosyl-L-methionine = 7,8-didemethyl-8-hydroxy-5-deazariboflavin + 5'-deoxyadenosine + L-methionine + NH4(+) + H(+). The protein operates within cofactor biosynthesis; coenzyme F0 biosynthesis. In terms of biological role, catalyzes the radical-mediated synthesis of 7,8-didemethyl-8-hydroxy-5-deazariboflavin from 5-amino-5-(4-hydroxybenzyl)-6-(D-ribitylimino)-5,6-dihydrouracil. In Methanosphaerula palustris (strain ATCC BAA-1556 / DSM 19958 / E1-9c), this protein is 7,8-didemethyl-8-hydroxy-5-deazariboflavin synthase.